A 427-amino-acid chain; its full sequence is 3-isopropylmalate dehydratase large subunit (427 aa).

C308, C368, and C371 together coordinate [4Fe-4S] cluster.

It belongs to the aconitase/IPM isomerase family. LeuC type 2 subfamily. Heterodimer of LeuC and LeuD. [4Fe-4S] cluster serves as cofactor.

The catalysed reaction is (2R,3S)-3-isopropylmalate = (2S)-2-isopropylmalate. Its pathway is amino-acid biosynthesis; L-leucine biosynthesis; L-leucine from 3-methyl-2-oxobutanoate: step 2/4. In terms of biological role, catalyzes the isomerization between 2-isopropylmalate and 3-isopropylmalate, via the formation of 2-isopropylmaleate. This is 3-isopropylmalate dehydratase large subunit from Geobacter sulfurreducens (strain ATCC 51573 / DSM 12127 / PCA).